Reading from the N-terminus, the 416-residue chain is Kelch repeat-containing protein At1g19460 (416 aa).

Positions Met-1–Ser-11 are enriched in polar residues. The tract at residues Met-1 to Ser-55 is disordered. 2 stretches are compositionally biased toward basic and acidic residues: residues Asp-16–Leu-26 and Asn-38–Arg-52. 4 Kelch repeats span residues Glu-156–Gly-202, Lys-203–Ala-250, Lys-255–Met-293, and Gln-294–Ser-344.

This Arabidopsis thaliana (Mouse-ear cress) protein is Kelch repeat-containing protein At1g19460.